The following is a 211-amino-acid chain: Thymidylate kinase (211 aa).

Residue 7 to 14 participates in ATP binding; sequence GIDGCGKT.

It belongs to the thymidylate kinase family.

It catalyses the reaction dTMP + ATP = dTDP + ADP. In terms of biological role, phosphorylation of dTMP to form dTDP in both de novo and salvage pathways of dTTP synthesis. This chain is Thymidylate kinase, found in Anaplasma marginale (strain Florida).